The sequence spans 138 residues: ATP synthase epsilon chain (138 aa).

The protein belongs to the ATPase epsilon chain family. In terms of assembly, F-type ATPases have 2 components, CF(1) - the catalytic core - and CF(0) - the membrane proton channel. CF(1) has five subunits: alpha(3), beta(3), gamma(1), delta(1), epsilon(1). CF(0) has three main subunits: a, b and c.

It localises to the cell inner membrane. Produces ATP from ADP in the presence of a proton gradient across the membrane. The sequence is that of ATP synthase epsilon chain from Cupriavidus metallidurans (strain ATCC 43123 / DSM 2839 / NBRC 102507 / CH34) (Ralstonia metallidurans).